Here is a 475-residue protein sequence, read N- to C-terminus: Adenosylhomocysteinase (475 aa).

Substrate contacts are provided by threonine 63, aspartate 138, and glutamate 199. 200–202 (TTT) provides a ligand contact to NAD(+). 2 residues coordinate substrate: lysine 229 and aspartate 233. NAD(+) is bound by residues asparagine 234, 263-268 (GYGDVG), glutamate 286, asparagine 321, 342-344 (IGH), and asparagine 389.

The protein belongs to the adenosylhomocysteinase family. Requires NAD(+) as cofactor.

The protein resides in the cytoplasm. It carries out the reaction S-adenosyl-L-homocysteine + H2O = L-homocysteine + adenosine. It functions in the pathway amino-acid biosynthesis; L-homocysteine biosynthesis; L-homocysteine from S-adenosyl-L-homocysteine: step 1/1. May play a key role in the regulation of the intracellular concentration of adenosylhomocysteine. This is Adenosylhomocysteinase from Solibacter usitatus (strain Ellin6076).